A 372-amino-acid polypeptide reads, in one-letter code: Segmentation polarity homeobox protein engrailed (372 aa).

Disordered stretches follow at residues 1–35, 47–112, 196–246, and 261–286; these read MAFE…YSPQ, YERG…LQPT, ERLS…QSNP, and DRPS…PRTA. 2 stretches are compositionally biased toward basic and acidic residues: residues 79–105 and 197–215; these read DYYR…DRSR and RLSR…KRPD. Residues 216–244 are compositionally biased toward low complexity; it reads SASSIVSSTSSGAVSTCGSSDASSIQSQS. The segment at residues 280–339 is a DNA-binding region (homeobox); it reads EKRPRTAFSGAQLARLKHEFAENRYLTERRRQSLAAELGLAEAQIKIWFQNKRAKIKKAS.

It belongs to the engrailed homeobox family. Expressed in the middle silk gland but not in the posterior silk gland during the fourth molt/fifth intermolt period.

Its subcellular location is the nucleus. This protein might be involved in the compartmentalization of the silk gland. This chain is Segmentation polarity homeobox protein engrailed (en), found in Bombyx mori (Silk moth).